A 460-amino-acid polypeptide reads, in one-letter code: Putative 2,3-dihydroxypropane-1-sulfonate exporter (460 aa).

Residues 1–18 (MSQTSSNPATLRLPFKEK) are Cytoplasmic-facing. The helical transmembrane segment at 19–39 (LAYGLGDLGSNILLDIGTLYL) threads the bilayer. The Periplasmic segment spans residues 40 to 46 (LKFYTDV). Residues 47 to 67 (LGLPGTYGGIIFLIAKFFTAF) form a helical membrane-spanning segment. Residues 68–91 (TDMGTGIMLDSRRKIGPKGKFRPF) are Cytoplasmic-facing. Residues 92 to 112 (VLYAAFPVTLLAIANFVGTPF) traverse the membrane as a helical segment. Topologically, residues 113-122 (EVTGKTVVAT) are periplasmic. A helical membrane pass occupies residues 123–143 (MLFMLYGLVFSMMNCSYGAMV). At 144-161 (PAITKNPDERASLAAWRQ) the chain is on the cytoplasmic side. A helical membrane pass occupies residues 162–182 (GGATLGLLLCTVGFVPVMNLI). Over 183-190 (EGNAQLSY) the chain is Periplasmic. The chain crosses the membrane as a helical span at residues 191–211 (IFAATLFSLFGLLFMWLCYAG). At 212–242 (VKERYVEVKPVDSAQKPGLLQSFRAIAGNRP) the chain is on the cytoplasmic side. Residues 243–263 (LFILCIANLCTLGAFNVKLAI) traverse the membrane as a helical segment. The Periplasmic segment spans residues 264 to 275 (QVYYTQYVLNDP). The helical transmembrane segment at 276 to 296 (ILLSWMGFFSMGCIFIGVFLM) threads the bilayer. Over 297-307 (PGAVRRFGKKK) the chain is Cytoplasmic. A helical membrane pass occupies residues 308–328 (VYIGGLLIWVAGDLLNYFFGG). Gly329 is a topological domain (periplasmic). Residues 330–350 (SVSFVAFSCLAFFGSAFVNSL) traverse the membrane as a helical segment. Topologically, residues 351–386 (NWALVSDTVEYGEWRTGVRSEGTVYTGFTFFRKVSQ) are cytoplasmic. A helical transmembrane segment spans residues 387–407 (ALAGFFPGWMLTQIGYIPNVV). Topologically, residues 408 to 418 (QSAGTVEGLRQ) are periplasmic. The helical transmembrane segment at 419–439 (LIFIYPCVLAVITIIAMGCFY) threads the bilayer. Over 440-460 (NLNEKMYVRIVEEIEARKHTV) the chain is Cytoplasmic.

It belongs to the sodium:galactoside symporter (TC 2.A.2) family.

It is found in the cell inner membrane. Could be involved in the export of 2,3-dihydroxypropane-1-sulfonate (DHPS). This is Putative 2,3-dihydroxypropane-1-sulfonate exporter (yihP) from Salmonella typhimurium (strain LT2 / SGSC1412 / ATCC 700720).